We begin with the raw amino-acid sequence, 474 residues long: Tubulin gamma-2 chain (474 aa).

142 to 148 contacts GTP; the sequence is AGGTGSG.

Belongs to the tubulin family. As to quaternary structure, gamma-tubulin complex is composed of gamma-tubulin and GCP proteins.

The protein resides in the cytoplasm. It is found in the cytoskeleton. Its subcellular location is the microtubule organizing center. It localises to the nucleus. The protein localises to the cell cortex. Functionally, tubulin is the major constituent of microtubules. The gamma chain is found at microtubule organizing centers (MTOC) such as the spindle poles, suggesting that it is involved in the minus-end nucleation of microtubule assembly. Gamma-tubulin complex is essential for the control of microtubular network remodeling in the course of initiation and development of giant-feeding cells, and for the successful reproduction of nematodes (e.g. Meloidogyne spp.) in their plant hosts. This Arabidopsis thaliana (Mouse-ear cress) protein is Tubulin gamma-2 chain (TUBG2).